Here is a 695-residue protein sequence, read N- to C-terminus: Potassium voltage-gated channel subfamily KQT member 4 (695 aa).

Residues 1-21 (MAEAPPRRLGLGPPPGDAPRA) are disordered. The Cytoplasmic segment spans residues 1 to 96 (MAEAPPRRLG…VYNVLERPRG (96 aa)). A 1,2-diacyl-sn-glycero-3-phospho-(1D-myo-inositol-4,5-bisphosphate) is bound at residue Arg-93. The chain crosses the membrane as a helical span at residues 97 to 118 (WAFVYHVFIFLLVFSCLVLSVL). Residues 119 to 129 (STIQEHQELAN) lie on the Extracellular side of the membrane. A helical membrane pass occupies residues 130–152 (ECLLILEFVMIVVFGLEYIVRVW). The Cytoplasmic portion of the chain corresponds to 153–168 (SAGCCCRYRGWQGRFR). The chain crosses the membrane as a helical span at residues 169 to 191 (FARKPFCVIDFIVFVASVAVIAA). An a 1,2-diacyl-sn-glycero-3-phospho-(1D-myo-inositol-4,5-bisphosphate)-binding site is contributed by Lys-172. Over 192-202 (GTQGNIFATSA) the chain is Extracellular. Residues 203 to 223 (LRSMRFLQILRMVRMDRRGGT) form a helical; Voltage-sensor membrane-spanning segment. A 1,2-diacyl-sn-glycero-3-phospho-(1D-myo-inositol-4,5-bisphosphate) contacts are provided by Arg-219, Arg-220, Lys-225, and Ser-235. At 224-235 (WKLLGSVVYAHS) the chain is on the cytoplasmic side. The helical transmembrane segment at 236–258 (KELITAWYIGFLVLIFASFLVYL) threads the bilayer. The Extracellular segment spans residues 259 to 270 (AEKDANSDFSSY). An intramembrane region (pore-forming) is located at residues 271 to 292 (ADSLWWGTITLTTIGYGDKTPH). Position 293 (Thr-293) is a topological domain, extracellular. Residues 294–322 (WLGRVLAAGFALLGISFFALPAGILGSGF) traverse the membrane as a helical segment. The Cytoplasmic segment spans residues 323–695 (ALKVQEQHRQ…ISRSVSTNMD (373 aa)). A 1,2-diacyl-sn-glycero-3-phospho-(1D-myo-inositol-4,5-bisphosphate) contacts are provided by His-330 and Lys-333. The segment at 342–351 (AANLIQAAWR) is interaction with CALM. Disordered regions lie at residues 400 to 480 (RRAP…TKVQ) and 496 to 515 (RLKP…AEEK). Polar residues-rich tracts occupy residues 443-452 (GSSQRRTGPS) and 463-480 (TSPS…TKVQ). The segment at 535–549 (RSIRILKFLVAKRKF) is interaction with CALM. The tract at residues 546–650 (KRKFKETLRP…SRCLRSGTSA (105 aa)) is C-terminal assembly domain (tetramerization). Residues 587-606 (VGRGPGDRKAREKGDKGPSD) are disordered. Residues 591–605 (PGDRKAREKGDKGPS) are compositionally biased toward basic and acidic residues. Residues 615-636 (MMGRVVKVEKQVQSIEHKLDLL) adopt a coiled-coil conformation.

This sequence belongs to the potassium channel family. KQT (TC 1.A.1.15) subfamily. Kv7.4/KCNQ4 sub-subfamily. In terms of assembly, homotetramer. Interacts (via C-terminus) with calmodulin; forms a heterooctameric structure (with 4:4 KCNQ1:CALM stoichiometry); the interaction is calcium-independent, constitutive, participates in the proper assembly of a functional channel. The interaction with calcium-free CALM controls channel trafficking whereas interaction with calcium-bound CALM regulates channel gating. May form a functional heteromultimeric channel with KCNQ3. Interacts with HSP90AB1; promotes cell surface expression of KCNQ4. In terms of tissue distribution, expressed in the outer, but not the inner, sensory hair cells of the cochlea. Slightly expressed in heart, brain and skeletal muscle.

The protein resides in the basal cell membrane. The enzyme catalyses K(+)(in) = K(+)(out). With respect to regulation, two molecules of phosphatidylinositol-4,5-bisphosphate (PIP2-I and PIP2-II) are essential to activate KCNQ4 channel by inducing the coupling of the voltage-sensing domain (VSD) and the pore-forming domain (PD). Upon channel activation, PIP2-I and PIP2-II disrupt the VSD-calmodulin/CALM interaction, causing the release of CALM from the VSD which triggers the opening of the gate. Calcium suppresses KCNQ4 channel current through calcium-bound CALM C-terminus. Therefore CALM acts as calcium sensor that controls channel activity. ML213 potentiates KCNQ4 channel. KCNQ4 channel is blocked by linopirdin, XE991 and bepridil, whereas clofilium is without significant effect. Muscarinic agonist oxotremorine-M strongly suppress KCNQ4 current in CHO cells in which cloned KCNQ4 channels were coexpressed with M1 muscarinic receptors. Functionally, pore-forming subunit of the voltage-gated potassium (Kv) channel involved in the regulation of sensory cells excitability in the cochlea. KCNQ4/Kv7.4 channel is composed of 4 pore-forming subunits assembled as tetramers. Promotes the outflow of potassium ions in the repolarization phase of action potential which plays a role in regulating membrane potential of excitable cells. The channel conducts a slowly activating and deactivating current. Current often shows some inward rectification at positive potentials. Channel may be selectively permeable in vitro to other cations besides potassium, in decreasing order of affinity K(+) = Rb(+) &gt; Cs(+) &gt; Na(+). Important for normal physiological function of inner ear such as sensory perception of sound. The polypeptide is Potassium voltage-gated channel subfamily KQT member 4 (Homo sapiens (Human)).